The primary structure comprises 218 residues: Outer-membrane lipoprotein LolB (218 aa).

Positions 1–24 (MNNLSYLTKIPLIWVLLSVTLLSA) are cleaved as a signal peptide. Cys25 carries N-palmitoyl cysteine lipidation. Cys25 carries S-diacylglycerol cysteine lipidation.

The protein belongs to the LolB family. As to quaternary structure, monomer.

The protein resides in the cell outer membrane. Plays a critical role in the incorporation of lipoproteins in the outer membrane after they are released by the LolA protein. The polypeptide is Outer-membrane lipoprotein LolB (Shewanella sediminis (strain HAW-EB3)).